A 149-amino-acid polypeptide reads, in one-letter code: 3-hydroxyacyl-[acyl-carrier-protein] dehydratase FabZ (149 aa).

The active site involves His49.

It belongs to the thioester dehydratase family. FabZ subfamily.

Its subcellular location is the cytoplasm. The enzyme catalyses a (3R)-hydroxyacyl-[ACP] = a (2E)-enoyl-[ACP] + H2O. Involved in unsaturated fatty acids biosynthesis. Catalyzes the dehydration of short chain beta-hydroxyacyl-ACPs and long chain saturated and unsaturated beta-hydroxyacyl-ACPs. This is 3-hydroxyacyl-[acyl-carrier-protein] dehydratase FabZ from Sulfurovum sp. (strain NBC37-1).